A 422-amino-acid chain; its full sequence is MAKTIQAIRGMNDCLPTQSPLWQKLENTVKNVISAYGYNEVRMPIVEETNLFSRAVGEETDVVSKEMYTFDDRNGDSLTLRPEGTAGCVRSCIQNSLINRDEQRLWYMGPMFRHERPQKGRYRQFHQCGVEVFGLNGPDVDAELIMMTARLWRELGIDKHVRLELNSIGSQEDRADYRTALVAFLEQHIDVLDEDCKRRMHTNPLRVLDTKNPDIQAILGDAPRLSEYLGEESKAHFAGLCELLDAAGIEYTVNERLVRGLDYYNRTVFEWITESLGAQGTVCGGGRYDGLVEQLGGKPTPAVGFAMGLERLVLMLETLELTDVRRSVDVYVVTAGEGTMMAGMKLAEQLREAISGVRVMNHFGGGNFKKQFKRADKVGAVVALVLGENEVADNTVVLKDLVGGEQETYNQAEVAEKIAALI.

This sequence belongs to the class-II aminoacyl-tRNA synthetase family. As to quaternary structure, homodimer.

It localises to the cytoplasm. It catalyses the reaction tRNA(His) + L-histidine + ATP = L-histidyl-tRNA(His) + AMP + diphosphate + H(+). In Vibrio parahaemolyticus serotype O3:K6 (strain RIMD 2210633), this protein is Histidine--tRNA ligase.